We begin with the raw amino-acid sequence, 399 residues long: Lysosomal acid lipase/cholesteryl ester hydrolase (399 aa).

An N-terminal signal peptide occupies residues 1–27 (MKMRFLGLVVCLVLWTLHSEGSGGKLT). A propeptide spans 28–76 (AVDPETNMNVSEIISYWGFPSEEYLVETEDGYILCLNRIPHGRKNHSDK) (removed in mature form). N36, N72, N101, and N161 each carry an N-linked (GlcNAc...) asparagine glycan. The 301-residue stretch at 80-380 (PVVFLQHGLL…EWEHLDFIWG (301 aa)) folds into the AB hydrolase-1 domain. The active-site Charge relay system is S174. N-linked (GlcNAc...) asparagine glycosylation is found at N273 and N321. The active-site Charge relay system is the H374.

The protein belongs to the AB hydrolase superfamily. Lipase family. In terms of assembly, monomer. In terms of processing, glycosylation is not essential for catalytic activity. As to expression, most abundantly expressed in brain, lung, kidney and mammary gland, a moderate expression seen in placenta and expressed at low levels in the liver and heart.

It is found in the lysosome. The enzyme catalyses a sterol ester + H2O = a sterol + a fatty acid + H(+). The catalysed reaction is cholesteryl (9Z-octadecenoate) + H2O = cholesterol + (9Z)-octadecenoate + H(+). It catalyses the reaction a triacylglycerol + H2O = a 1,2-diacylglycerol + a fatty acid + H(+). It carries out the reaction 1,2-di-(9Z-octadecenoyl)-glycerol + (9Z)-octadecenoate + H(+) = 1,2,3-tri-(9Z-octadecenoyl)-glycerol + H2O. The enzyme catalyses a 1,2-diacylglycerol + H2O = a 1-acylglycerol + a fatty acid + H(+). The catalysed reaction is 1,2-di-(9Z-octadecenoyl)-glycerol + H2O = 1-(9Z-octadecenoyl)-glycerol + (9Z)-octadecenoate + H(+). It catalyses the reaction a 1,3-diacylglycerol + H2O = a 1-acylglycerol + a fatty acid + H(+). It carries out the reaction 1,3-di-(9Z-octadecenoyl)-glycerol + H2O = 1-(9Z-octadecenoyl)-glycerol + (9Z)-octadecenoate + H(+). Its function is as follows. Catalyzes the deacylation of cholesteryl ester core lipids of endocytosed low density lipoproteins to generate free fatty acids and cholesterol. Hydrolyzes triglycerides (1,2,3-triacylglycerol) and diglycerides (such as 1,2-diacylglycerol and 1,3-diacylglycerol) with preference for the acyl moieties at the sn-1 or sn-3 positions. The chain is Lysosomal acid lipase/cholesteryl ester hydrolase (LIPA) from Homo sapiens (Human).